The primary structure comprises 692 residues: Elongation factor G (692 aa).

Residues glutamate 8–leucine 282 enclose the tr-type G domain. GTP contacts are provided by residues alanine 17–threonine 24, aspartate 81–histidine 85, and asparagine 135–aspartate 138.

It belongs to the TRAFAC class translation factor GTPase superfamily. Classic translation factor GTPase family. EF-G/EF-2 subfamily.

The protein localises to the cytoplasm. Functionally, catalyzes the GTP-dependent ribosomal translocation step during translation elongation. During this step, the ribosome changes from the pre-translocational (PRE) to the post-translocational (POST) state as the newly formed A-site-bound peptidyl-tRNA and P-site-bound deacylated tRNA move to the P and E sites, respectively. Catalyzes the coordinated movement of the two tRNA molecules, the mRNA and conformational changes in the ribosome. In Bacillus cereus (strain Q1), this protein is Elongation factor G.